A 219-amino-acid chain; its full sequence is Ras-related protein Rab-3B (219 aa).

N-acetylalanine is present on A2. Residues S31, S32, V33, G34, K35, T36, S37, P49, and S53 each coordinate GTP. Residue T36 coordinates Mg(2+). The short motif at 45–58 (DTFTPAFVSTVGID) is the Switch 1 element. Mg(2+) contacts are provided by T54 and D77. The Switch 2 motif lies at 78–96 (TAGQERYRTITTAYYRGAM). Residue G80 participates in GTP binding. Position 86 is a phosphothreonine; by LRRK2 (T86). 5 residues coordinate GTP: N135, K136, D138, A166, and K167. 2 positions are modified to phosphoserine: S188 and S190. 2 S-geranylgeranyl cysteine lipidation sites follow: C217 and C219. C219 carries the cysteine methyl ester modification.

Belongs to the small GTPase superfamily. Rab family. Interacts with RIMS1, RIMS2, RPH3A and RPH3AL. The GTP-bound form interacts with GAS8/DRC4 (via coiled-coil domains). Interacts with GDI2, CHM and CHML; phosphorylation at Thr-86 disrupts these interactions. Interacts with MADD (via uDENN domain); the GTP-bound form is preferred for interaction. Mg(2+) is required as a cofactor. Post-translationally, phosphorylation of Thr-86 in the switch II region by LRRK2 prevents the association of RAB regulatory proteins, including CHM, CHML and RAB GDP dissociation inhibitor GDI2. As to expression, abundantly expressed in testis, lung and brain.

It is found in the cell membrane. The protein localises to the golgi apparatus. The catalysed reaction is GTP + H2O = GDP + phosphate + H(+). Regulated by guanine nucleotide exchange factors (GEFs) which promote the exchange of bound GDP for free GTP. Regulated by GTPase activating proteins (GAPs) which increase the GTP hydrolysis activity. Inhibited by GDP dissociation inhibitors (GDIs) which prevent Rab-GDP dissociation. Functionally, the small GTPases Rab are key regulators of intracellular membrane trafficking, from the formation of transport vesicles to their fusion with membranes. Rabs cycle between an inactive GDP-bound form and an active GTP-bound form that is able to recruit to membranes different sets of downstream effectors directly responsible for vesicle formation, movement, tethering and fusion. The protein is Ras-related protein Rab-3B of Mus musculus (Mouse).